A 432-amino-acid chain; its full sequence is Trigger factor (432 aa).

A PPIase FKBP-type domain is found at 161–246; sequence EDRVTIDFTG…LKKVEERELP (86 aa).

This sequence belongs to the FKBP-type PPIase family. Tig subfamily. As to quaternary structure, homodimer and monomer. In vivo most of the ribosomes are in complex with monomeric TF. Uncomplexed TF, however, is in a monomer-dimer equilibrium with approximately two thirds of TF existing in a dimeric state.

Its subcellular location is the cytoplasm. It carries out the reaction [protein]-peptidylproline (omega=180) = [protein]-peptidylproline (omega=0). Its function is as follows. Involved in protein export. Acts as a chaperone by maintaining the newly synthesized protein in an open conformation. Functions as a peptidyl-prolyl cis-trans isomerase. This chain is Trigger factor, found in Escherichia coli O127:H6 (strain E2348/69 / EPEC).